The sequence spans 114 residues: Holo-[acyl-carrier-protein] synthase (114 aa).

2 residues coordinate Mg(2+): D5 and E50.

This sequence belongs to the P-Pant transferase superfamily. AcpS family. Requires Mg(2+) as cofactor.

The protein resides in the cytoplasm. The catalysed reaction is apo-[ACP] + CoA = holo-[ACP] + adenosine 3',5'-bisphosphate + H(+). Transfers the 4'-phosphopantetheine moiety from coenzyme A to a Ser of acyl-carrier-protein. This Campylobacter curvus (strain 525.92) protein is Holo-[acyl-carrier-protein] synthase.